The primary structure comprises 370 residues: Histidinol-phosphate aminotransferase 3 (370 aa).

The residue at position 233 (K233) is an N6-(pyridoxal phosphate)lysine.

It belongs to the class-II pyridoxal-phosphate-dependent aminotransferase family. Histidinol-phosphate aminotransferase subfamily. As to quaternary structure, homodimer. It depends on pyridoxal 5'-phosphate as a cofactor.

The enzyme catalyses L-histidinol phosphate + 2-oxoglutarate = 3-(imidazol-4-yl)-2-oxopropyl phosphate + L-glutamate. The protein operates within amino-acid biosynthesis; L-histidine biosynthesis; L-histidine from 5-phospho-alpha-D-ribose 1-diphosphate: step 7/9. The protein is Histidinol-phosphate aminotransferase 3 of Burkholderia lata (strain ATCC 17760 / DSM 23089 / LMG 22485 / NCIMB 9086 / R18194 / 383).